A 288-amino-acid polypeptide reads, in one-letter code: Nucleotide-binding protein Gura_2968 (288 aa).

8 to 15 (GLSGSGKS) lines the ATP pocket. Residue 59–62 (DIRG) coordinates GTP.

The protein belongs to the RapZ-like family.

Functionally, displays ATPase and GTPase activities. The polypeptide is Nucleotide-binding protein Gura_2968 (Geotalea uraniireducens (strain Rf4) (Geobacter uraniireducens)).